We begin with the raw amino-acid sequence, 262 residues long: F-actin-capping protein subunit alpha (262 aa).

This sequence belongs to the F-actin-capping protein alpha subunit family. In terms of assembly, heterodimer of an alpha and a beta subunit.

The protein resides in the cytoplasm. Its subcellular location is the cytoskeleton. F-actin-capping proteins bind in a Ca(2+)-independent manner to the fast growing ends of actin filaments (barbed end) thereby blocking the exchange of subunits at these ends. Unlike other capping proteins (such as gelsolin and severin), these proteins do not sever actin filaments. The sequence is that of F-actin-capping protein subunit alpha (CAP1) from Yarrowia lipolytica (strain CLIB 122 / E 150) (Yeast).